The sequence spans 229 residues: Large ribosomal subunit protein uL1 (229 aa).

The protein belongs to the universal ribosomal protein uL1 family. Part of the 50S ribosomal subunit.

Its function is as follows. Binds directly to 23S rRNA. The L1 stalk is quite mobile in the ribosome, and is involved in E site tRNA release. Protein L1 is also a translational repressor protein, it controls the translation of the L11 operon by binding to its mRNA. This Chlorobium luteolum (strain DSM 273 / BCRC 81028 / 2530) (Pelodictyon luteolum) protein is Large ribosomal subunit protein uL1.